A 183-amino-acid chain; its full sequence is Phosphinothricin N-acetyltransferase (183 aa).

Positions 8 to 169 (VEIRPATAAD…DVGFWQRDFE (162 aa)) constitute an N-acetyltransferase domain. Residues 91 to 93 (VYV), 99 to 104 (RLGLGS), and N130 contribute to the acetyl-CoA site.

Belongs to the acetyltransferase family. PAT/BAR subfamily.

The enzyme catalyses phosphinothricin + acetyl-CoA = N-acetylphosphinothricin + CoA + H(+). Its function is as follows. Inactivates phosphinothricin (PPT) by transfer of an acetyl group from acetyl CoA. This enzyme is an effector of phosphinothricin tripeptide (PTT or bialaphos) resistance. This Streptomyces viridochromogenes (strain DSM 40736 / JCM 4977 / BCRC 1201 / Tue 494) protein is Phosphinothricin N-acetyltransferase.